The following is a 144-amino-acid chain: Vasopressin-neurophysin 2-copeptin (144 aa).

Cysteines 1 and 6 form a disulfide. The residue at position 9 (Gly-9) is a Glycine amide. Cystine bridges form between Cys-22/Cys-66, Cys-25/Cys-39, Cys-33/Cys-56, Cys-40/Cys-46, Cys-73/Cys-85, Cys-79/Cys-97, and Cys-86/Cys-91. N-linked (GlcNAc...) asparagine glycosylation is present at Asn-112.

This sequence belongs to the vasopressin/oxytocin family. Interacts with vasopressin receptors V1bR/AVPR1B (Ki=85 pM), V1aR/AVPR1A (Ki=0.6 nM) and V2R/AVPR2 (Ki=4.9 nM). Interacts with oxytocin receptor (OXTR) (Ki=110 nM).

It localises to the secreted. Neurophysin 2 specifically binds vasopressin. Its function is as follows. Vasopressin has a direct antidiuretic action on the kidney, it also causes vasoconstriction of the peripheral vessels. Acts by binding to vasopressin receptors (V1bR/AVPR1B, V1aR/AVPR1A, and V2R/AVPR2). This is Vasopressin-neurophysin 2-copeptin (AVP) from Cavia porcellus (Guinea pig).